A 410-amino-acid polypeptide reads, in one-letter code: Multidrug resistance protein MdtA (410 aa).

The signal sequence occupies residues 1-21 (MNNRYPVMKKGLIVLVVIAVA). The segment at 36–56 (SDGDLSGQSAHGKRGNGAHKP) is disordered.

Belongs to the membrane fusion protein (MFP) (TC 8.A.1) family. Part of a tripartite efflux system composed of MdtA, MdtB and MdtC.

The protein resides in the cell inner membrane. The sequence is that of Multidrug resistance protein MdtA from Pantoea ananatis (strain AJ13355).